Reading from the N-terminus, the 223-residue chain is uncharacterized protein (223 aa).

Positions 1 to 11 (MLWVQRKRRRK) are enriched in basic residues. Positions 1-37 (MLWVQRKRRRKETSECPSDKDKSPESHKAKNESWIKS) are disordered. The span at 12-37 (ETSECPSDKDKSPESHKAKNESWIKS) shows a compositional bias: basic and acidic residues. Ser43 carries the post-translational modification Phosphoserine. Disordered stretches follow at residues 49 to 73 (LDNN…SSTV) and 196 to 223 (THTF…NRRH). Over residues 51-61 (NNASASGNATQ) the composition is skewed to polar residues. Residues 62 to 73 (TESGSEEVSSTV) are compositionally biased toward low complexity. Over residues 202 to 223 (HSHHSHHGHPSHQSHSLPNRRH) the composition is skewed to basic residues.

This is an uncharacterized protein from Homo sapiens (Human).